The primary structure comprises 430 residues: 2-deoxy-scyllo-inosose synthase (430 aa).

NAD(+) contacts are provided by residues D42, 73 to 76, 105 to 109, 129 to 130, 140 to 142, and 151 to 152; these read EVHK, GVTGN, TT, SLK, and KN. The active site involves K142. E184 serves as a coordination point for Co(2+). E244 is a catalytic residue. Residues H247 and H263 each contribute to the Co(2+) site. The segment at 371–430 is disordered; the sequence is RGGAGGGAAEPAAARTGPVPDGPEAAVPATPGPVPAGPAAAAPLPSGPAPTAPAAAGPVP. A compositionally biased stretch (low complexity) spans 379–399; the sequence is AEPAAARTGPVPDGPEAAVPA.

The protein belongs to the sugar phosphate cyclases superfamily. DOI synthase family. It depends on NAD(+) as a cofactor. Co(2+) is required as a cofactor.

It carries out the reaction D-glucose 6-phosphate = 2-deoxy-L-scyllo-inosose + phosphate. The protein operates within metabolic intermediate biosynthesis; 2-deoxystreptamine biosynthesis; 2-deoxystreptamine from D-glucose 6-phosphate: step 1/4. It functions in the pathway antibiotic biosynthesis; neomycin biosynthesis. Its function is as follows. Catalyzes the intramolecular carbocycle formation from D-glucose-6-phosphate to 2-deoxy-scyllo-inosose (DOI). This is 2-deoxy-scyllo-inosose synthase (neoC) from Streptomyces fradiae (Streptomyces roseoflavus).